The following is a 155-amino-acid chain: Fibroblast growth factor 1 (155 aa).

Residues 1–15 constitute a propeptide that is removed on maturation; that stretch reads MAEGDITTFNAITES. Asn33 contributes to the heparin binding site. Positions 127–143 are heparin-binding; it reads KKNGASKKGSRTHYGQK.

It belongs to the heparin-binding growth factors family.

It is found in the secreted. It localises to the cytoplasm. The protein localises to the cell cortex. The protein resides in the cytosol. Its subcellular location is the nucleus. Plays an important role in the regulation of cell survival, cell division, angiogenesis, cell differentiation and cell migration. Functions as a potent mitogen in vitro. Acts as a ligand for FGFR1 and integrins. Binds to FGFR1 in the presence of heparin leading to FGFR1 dimerization and activation via sequential autophosphorylation on tyrosine residues which act as docking sites for interacting proteins, leading to the activation of several signaling cascades. Binds to integrins. Its binding to integrins and subsequent ternary complex formation with integrins and FGFR1 are essential for FGF1 signaling. The protein is Fibroblast growth factor 1 (fgf1) of Xenopus laevis (African clawed frog).